Here is a 379-residue protein sequence, read N- to C-terminus: RIB43A-like with coiled-coils protein 1 (379 aa).

Residues 1–21 (MYNINQSTDTKEAAAIEARRN) are disordered. Positions 9-21 (DTKEAAAIEARRN) are enriched in basic and acidic residues. Coiled coils occupy residues 85-111 (ADRTRRLAKKVQEFREQKQQLKNGREF), 161-241 (RYNL…KANL), and 280-304 (EQRAAIRKEQEVQRSKKEAHRQAEK).

The protein belongs to the RIB43A family. Microtubule inner protein component of sperm flagellar doublet microtubules.

The protein localises to the cytoplasm. It localises to the cytoskeleton. Its subcellular location is the flagellum axoneme. The chain is RIB43A-like with coiled-coils protein 1 (RIBC1) from Macaca fascicularis (Crab-eating macaque).